A 132-amino-acid polypeptide reads, in one-letter code: Acetylcholinesterase (132 aa).

Asn37 carries N-linked (GlcNAc...) asparagine glycosylation. Cys45 and Cys72 form a disulfide bridge.

It belongs to the type-B carboxylesterase/lipase family.

The protein localises to the synapse. Its subcellular location is the secreted. The protein resides in the cell membrane. It carries out the reaction acetylcholine + H2O = choline + acetate + H(+). In terms of biological role, rapidly hydrolyzes choline released into the synapse. The polypeptide is Acetylcholinesterase (ACE-1) (Culex pipiens pipiens (Northern house mosquito)).